We begin with the raw amino-acid sequence, 528 residues long: Dihydromonacolin L monooxygenase LovA (528 aa).

Residues Met1–His23 are Cytoplasmic-facing. Residues Gly24–Leu44 form a helical; Signal-anchor for type II membrane protein membrane-spanning segment. Residues Cys45–Leu528 are Lumenal-facing. N-linked (GlcNAc...) asparagine glycosylation occurs at Asn399. Cys465 is a binding site for heme.

This sequence belongs to the cytochrome P450 family. It depends on heme as a cofactor.

The protein resides in the membrane. It is found in the endoplasmic reticulum membrane. The enzyme catalyses dihydromonacolin L carboxylate + reduced [NADPH--hemoprotein reductase] + O2 = monacolin L carboxylate + oxidized [NADPH--hemoprotein reductase] + 2 H2O + H(+). The catalysed reaction is monacolin L carboxylate + reduced [NADPH--hemoprotein reductase] + O2 = monacolin J carboxylate + oxidized [NADPH--hemoprotein reductase] + H2O + H(+). It participates in polyketide biosynthesis; lovastatin biosynthesis. Its function is as follows. Dihydromonacolin L monooxygenase; part of the gene cluster that mediates the biosynthesis of lovastatin (also known as mevinolin, mevacor or monacolin K), a hypolipidemic inhibitor of (3S)-hydroxymethylglutaryl-coenzyme A (HMG-CoA) reductase (HMGR). The first step in the biosynthesis of lovastatin is the production of dihydromonacolin L acid by the lovastatin nonaketide synthase lovB and the trans-acting enoyl reductase lovC via condensation of one acetyl-CoA unit and 8 malonyl-CoA units. Dihydromonacolin L acid is released from lovB by the thioesterase lovG. Next, dihydromonacolin L acid is oxidized by the dihydromonacolin L monooxygenase lovA twice to form monacolin J acid. The 2-methylbutyrate moiety of lovastatin is synthesized by the lovastatin diketide synthase lovF via condensation of one acetyl-CoA unit and one malonyl-CoA unit. Finally, the covalent attachment of this moiety to monacolin J acid is catalyzed by the transesterase lovD to yield lovastatin. LovD has broad substrate specificity and can also convert monacolin J to simvastatin using alpha-dimethylbutanoyl-S-methyl-3-mercaptopropionate (DMB-S-MMP) as the thioester acyl donor, and can also catalyze the reverse reaction and function as hydrolase in vitro. LovD has much higher activity with LovF-bound 2-methylbutanoate than with free diketide substrates. The chain is Dihydromonacolin L monooxygenase LovA from Aspergillus terreus (strain NIH 2624 / FGSC A1156).